A 185-amino-acid chain; its full sequence is Ribosome-recycling factor (185 aa).

Belongs to the RRF family.

The protein localises to the cytoplasm. Responsible for the release of ribosomes from messenger RNA at the termination of protein biosynthesis. May increase the efficiency of translation by recycling ribosomes from one round of translation to another. The chain is Ribosome-recycling factor from Pseudomonas paraeruginosa (strain DSM 24068 / PA7) (Pseudomonas aeruginosa (strain PA7)).